Here is a 600-residue protein sequence, read N- to C-terminus: E3 ubiquitin-protein ligase RLIM (600 aa).

Residue M1 is modified to N-acetylmethionine. Positions 1 to 11 (MENSDSNDKGS) are enriched in basic and acidic residues. Disordered regions lie at residues 1 to 24 (MENSDSNDKGSDQSAAQRRSQMDR), 49 to 355 (NNLL…ERGG), and 417 to 497 (SDSE…VTFD). Composition is skewed to polar residues over residues 103–131 (SVRQTGNTTRSGQRGNQSWRAVSRTNPNS) and 140–152 (INVNRNNGSQTSE). Position 163 is a phosphoserine (S163). Over residues 166–175 (NMESSSQRQM) the composition is skewed to polar residues. Over residues 176 to 187 (ENSASESASARP) the composition is skewed to low complexity. A phosphoserine mark is found at S194, S227, and S229. The segment covering 213 to 228 (RSPEHRRTRARAERSR) has biased composition (basic and acidic residues). Positions 244–255 (LEQSSENEPEGS) are enriched in polar residues. S269 is modified (phosphoserine). The segment covering 288–306 (SQGTSSSDTGSNSESSGSG) has biased composition (low complexity). Residues 322-332 (RPGEYRQRDSI) show a composition bias toward basic and acidic residues. Positions 333–349 (ASRTRSRSQAPNNTVTY) are enriched in polar residues. Positions 448–475 (SGSSSSSSPSPSSSGESSESSSEMFEGS) are enriched in low complexity. The segment at 546 to 587 (CSVCITEYTEGNKLRKLPCSHEYHVHCIDRWLSENSTCPICR) adopts an RING-type zinc-finger fold. Positions 597 to 600 (ESVV) match the PDZ-binding motif.

This sequence belongs to the RNF12 family. In terms of assembly, interacts (via N-terminus) with TERF1. Interacts (via C-terminus) with ESR1. Interacts with LIM/homeobox factors such as LHX3. Interacts with LDB1, LDB2 and SIN3A. Interacts with LIMK1.

It is found in the nucleus. The enzyme catalyses S-ubiquitinyl-[E2 ubiquitin-conjugating enzyme]-L-cysteine + [acceptor protein]-L-lysine = [E2 ubiquitin-conjugating enzyme]-L-cysteine + N(6)-ubiquitinyl-[acceptor protein]-L-lysine.. The protein operates within protein modification; protein ubiquitination. E3 ubiquitin-protein ligase that acts as a negative coregulator for LIM homeodomain transcription factors by mediating the ubiquitination and subsequent degradation of LIM cofactors LDB1 and LDB2 and by mediating the recruitment the SIN3a/histone deacetylase corepressor complex. Ubiquitination and degradation of LIM cofactors LDB1 and LDB2 allows DNA-bound LIM homeodomain transcription factors to interact with other protein partners such as RLIM. Plays a role in telomere length-mediated growth suppression by mediating the ubiquitination and degradation of TERF1. By targeting ZFP42 for degradation, acts as an activator of random inactivation of X chromosome in the embryo, a stochastic process in which one X chromosome is inactivated to minimize sex-related dosage differences of X-encoded genes in somatic cells of female placental mammals. In Mus musculus (Mouse), this protein is E3 ubiquitin-protein ligase RLIM (Rlim).